Consider the following 231-residue polypeptide: DNA mismatch repair protein MutH (231 aa).

It belongs to the MutH family.

The protein localises to the cytoplasm. Functionally, sequence-specific endonuclease that cleaves unmethylated GATC sequences. It is involved in DNA mismatch repair. The polypeptide is DNA mismatch repair protein MutH (Salmonella paratyphi A (strain ATCC 9150 / SARB42)).